Reading from the N-terminus, the 223-residue chain is Ribose-5-phosphate isomerase A (223 aa).

Substrate contacts are provided by residues 28 to 31 (TGST), 81 to 84 (DGAD), and 94 to 97 (KGGG). E103 acts as the Proton acceptor in catalysis. K121 contributes to the substrate binding site.

This sequence belongs to the ribose 5-phosphate isomerase family. In terms of assembly, homodimer.

The catalysed reaction is aldehydo-D-ribose 5-phosphate = D-ribulose 5-phosphate. The protein operates within carbohydrate degradation; pentose phosphate pathway; D-ribose 5-phosphate from D-ribulose 5-phosphate (non-oxidative stage): step 1/1. In terms of biological role, catalyzes the reversible conversion of ribose-5-phosphate to ribulose 5-phosphate. This chain is Ribose-5-phosphate isomerase A, found in Herminiimonas arsenicoxydans.